Reading from the N-terminus, the 162-residue chain is UPF0114 protein Shewmr4_0646 (162 aa).

Helical transmembrane passes span 15-35 (IMAP…IKFF), 53-73 (LVLV…IVMV), 108-128 (KVAA…FMDV), and 136-156 (IMWY…MGYL).

It belongs to the UPF0114 family.

The protein localises to the cell membrane. This chain is UPF0114 protein Shewmr4_0646, found in Shewanella sp. (strain MR-4).